We begin with the raw amino-acid sequence, 360 residues long: DNA replication and repair protein RecF (360 aa).

30-37 (GHNGSGKT) contacts ATP.

It belongs to the RecF family.

The protein resides in the cytoplasm. Functionally, the RecF protein is involved in DNA metabolism; it is required for DNA replication and normal SOS inducibility. RecF binds preferentially to single-stranded, linear DNA. It also seems to bind ATP. This is DNA replication and repair protein RecF from Shewanella pealeana (strain ATCC 700345 / ANG-SQ1).